A 483-amino-acid chain; its full sequence is MLIFEHSRKNRRNYSQAPATRPAKNNIPDHLKRKSTPLLPEVSEMDTVRHYTRLSQKNFSIDTEFYPLGSCTMKYNPRACNSLAMLPQFLSRHPLAPEDTGQGFLACMYELQEILKDITGMAAVSLTSMAGAQGELIGITMIRAYHEAHGDTGRTEIIIPDAAHGTNPATAVMCGYKVIEIPTNRDGDVDMDALKAAVGPKTAGLMLTNPSTLGVFEKKVAEMSRIVHAAGGLLYYDGANLNAVLGKVKPGDMGFDVIHMNLHKTFSTPHGGGGPGAAPVGVAERLLPYLPVPIVAHEQGVYRWLTEEDRPQTIGRLSAHMGNAGVLLRAYIYVRLLGAEGMHRISEYATLNANYLMAELRKLGFEIAYPNRRASHEFIVTMKEIKDRTGVTAMNLAKRLLDKGFHAPTTYFPLLVPECLLIEPAETESKETLDRFVAAMKEILDEIATQPDMVKAAPHDMPLRKIDDVKAARELDLVWDPAG.

Positions 1–33 (MLIFEHSRKNRRNYSQAPATRPAKNNIPDHLKR) are disordered. Lys-264 bears the N6-(pyridoxal phosphate)lysine mark.

This sequence belongs to the GcvP family. C-terminal subunit subfamily. As to quaternary structure, the glycine cleavage system is composed of four proteins: P, T, L and H. In this organism, the P 'protein' is a heterodimer of two subunits. Pyridoxal 5'-phosphate is required as a cofactor.

The catalysed reaction is N(6)-[(R)-lipoyl]-L-lysyl-[glycine-cleavage complex H protein] + glycine + H(+) = N(6)-[(R)-S(8)-aminomethyldihydrolipoyl]-L-lysyl-[glycine-cleavage complex H protein] + CO2. In terms of biological role, the glycine cleavage system catalyzes the degradation of glycine. The P protein binds the alpha-amino group of glycine through its pyridoxal phosphate cofactor; CO(2) is released and the remaining methylamine moiety is then transferred to the lipoamide cofactor of the H protein. The chain is Probable glycine dehydrogenase (decarboxylating) subunit 2 from Nitrosomonas europaea (strain ATCC 19718 / CIP 103999 / KCTC 2705 / NBRC 14298).